The sequence spans 399 residues: Accessory Sec system protein translocase subunit SecY2 (399 aa).

10 helical membrane passes run 14–34 (IFFT…SIVS), 60–80 (LNIF…LTLI), 102–122 (ALTL…YINK), 128–148 (SNML…VWLA), 152–172 (TTYG…KSIF), 183–203 (ASLI…LFFI), 237–257 (ISIM…NFIG), 272–292 (FTNP…GYFL), 335–355 (WFGS…ALLV), and 362–382 (VYFT…AETI).

It belongs to the SecY/SEC61-alpha family. SecY2 subfamily. In terms of assembly, component of the accessory SecA2/SecY2 protein translocase complex required to export cell wall proteins. May form heterotrimers with SecE and SecG subunits.

It localises to the cell membrane. Part of the accessory SecA2/SecY2 system specifically required for export of possible cell wall proteins. The central subunit of a protein translocation channel. The chain is Accessory Sec system protein translocase subunit SecY2 from Staphylococcus epidermidis (strain ATCC 12228 / FDA PCI 1200).